Consider the following 222-residue polypeptide: PKHD-type hydroxylase P9301_13621 (222 aa).

The 95-residue stretch at Lys81–Ser175 folds into the Fe2OG dioxygenase domain. Fe cation-binding residues include His99, Asp101, and His156. Arg166 is a 2-oxoglutarate binding site.

The cofactor is Fe(2+). L-ascorbate serves as cofactor.

The chain is PKHD-type hydroxylase P9301_13621 from Prochlorococcus marinus (strain MIT 9301).